Consider the following 380-residue polypeptide: Cystathionine gamma-synthase (380 aa).

Lys-195 bears the N6-(pyridoxal phosphate)lysine mark.

This sequence belongs to the trans-sulfuration enzymes family. As to quaternary structure, homotetramer. The cofactor is pyridoxal 5'-phosphate.

It localises to the cytoplasm. The catalysed reaction is O-succinyl-L-homoserine + L-cysteine = L,L-cystathionine + succinate + H(+). In terms of biological role, catalyzes the formation of L-cystathionine from O-succinyl-L-homoserine (OSHS) and L-cysteine, via a gamma-replacement reaction. In the absence of thiol, catalyzes gamma-elimination to form 2-oxobutanoate, succinate and ammonia. This Helicobacter pylori (strain J99 / ATCC 700824) (Campylobacter pylori J99) protein is Cystathionine gamma-synthase (metB).